A 261-amino-acid polypeptide reads, in one-letter code: MASQLQNRLRSALALVTGAGSGIGRAVSVRLAGEGATVAACDLDRAAAQETVRLLGGPGSKEGPPRGNHAAFQADVSEARAARCLLEQVQACFSRPPSVVVSCAGITQDEFLLHMSEDDWDKVIAVNLKGTFLVTQAAAQALVSNGCRGSIINISSIVGKVGNVGQTNYAASKAGVIGLTQTAARELGRHGIRCNSVLPGFIATPMTQKVPQKVVDKITEMIPMGHLGDPEDVADVVAFLASEDSGYITGTSVEVTGGLFM.

NAD(+) is bound by residues 15 to 23 and 42 to 43; these read LVTGAGSGI and DL. S60 carries the post-translational modification Phosphoserine. 74 to 76 serves as a coordination point for NAD(+); that stretch reads ADV. S156 lines the substrate pocket. Position 160 is an N6-succinyllysine (K160). Y169 serves as the catalytic Proton acceptor. Residues 169–173 and 202–204 each bind NAD(+); these read YAASK and IAT. K173 is modified (N6-succinyllysine).

Belongs to the short-chain dehydrogenases/reductases (SDR) family. In terms of assembly, heterotetramer with CBR4; contains two molecules of HSD17B8 and CBR4. In terms of tissue distribution, widely expressed, particularly abundant in prostate, placenta and kidney. Expressed at protein level in various tissues like brain, cerebellum, heart, lung, kidney, ovary, testis, adrenals and prostate.

The protein resides in the mitochondrion matrix. The enzyme catalyses a (3R)-3-hydroxyacyl-CoA + NAD(+) = a 3-oxoacyl-CoA + NADH + H(+). It catalyses the reaction 17beta-estradiol + NAD(+) = estrone + NADH + H(+). The catalysed reaction is testosterone + NAD(+) = androst-4-ene-3,17-dione + NADH + H(+). It carries out the reaction 17beta-hydroxy-5alpha-androstan-3-one + NAD(+) = 5alpha-androstan-3,17-dione + NADH + H(+). Its pathway is steroid biosynthesis; estrogen biosynthesis. It functions in the pathway lipid metabolism; fatty acid biosynthesis. It participates in lipid metabolism; mitochondrial fatty acid beta-oxidation. Required for the solubility and assembly of the heterotetramer 3-ketoacyl-[acyl carrier protein] (ACP) reductase functional complex (KAR or KAR1) that forms part of the mitochondrial fatty acid synthase (mtFAS). Alpha-subunit of the KAR complex that acts as a scaffold protein required for the stability of carbonyl reductase type-4 (CBR4, beta-subunit of the KAR complex) and for its 3-ketoacyl-ACP reductase activity, thereby participating in mitochondrial fatty acid biosynthesis. Catalyzes the NAD-dependent conversion of (3R)-3-hydroxyacyl-CoA into 3-ketoacyl-CoA (3-oxoacyl-CoA) with no chain length preference; this enzymatic activity is not needed for the KAR function. Prefers (3R)-3-hydroxyacyl-CoA over (3S)-3-hydroxyacyl-CoA and displays enzymatic activity only in the presence of NAD(+). Cooperates with enoyl-CoA hydratase 1 in mitochondria, together they constitute an alternative route to the auxiliary enzyme pathways for the breakdown of Z-PUFA (cis polyunsaturated fatty acid) enoyl-esters. NAD-dependent 17-beta-hydroxysteroid dehydrogenase with highest activity towards estradiol (17beta-estradiol or E2). Has very low activity towards testosterone and dihydrotestosterone (17beta-hydroxy-5alpha-androstan-3-one). Primarily an oxidative enzyme, it can switch to a reductive mode determined in the appropriate physiologic milieu and catalyze the reduction of estrone (E1) to form biologically active 17beta-estradiol. The chain is (3R)-3-hydroxyacyl-CoA dehydrogenase (HSD17B8) from Homo sapiens (Human).